The chain runs to 346 residues: 3-dehydroquinate synthase (346 aa).

NAD(+)-binding positions include 62-67 (DGEQYK), 96-100 (GVISD), 120-121 (TT), lysine 133, and lysine 142. The Zn(2+) site is built by glutamate 175, histidine 234, and histidine 251.

This sequence belongs to the sugar phosphate cyclases superfamily. Dehydroquinate synthase family. The cofactor is Co(2+). Requires Zn(2+) as cofactor. NAD(+) serves as cofactor.

It localises to the cytoplasm. The enzyme catalyses 7-phospho-2-dehydro-3-deoxy-D-arabino-heptonate = 3-dehydroquinate + phosphate. It functions in the pathway metabolic intermediate biosynthesis; chorismate biosynthesis; chorismate from D-erythrose 4-phosphate and phosphoenolpyruvate: step 2/7. Its function is as follows. Catalyzes the conversion of 3-deoxy-D-arabino-heptulosonate 7-phosphate (DAHP) to dehydroquinate (DHQ). The polypeptide is 3-dehydroquinate synthase (Campylobacter fetus subsp. fetus (strain 82-40)).